A 262-amino-acid chain; its full sequence is Small ribosomal subunit protein uS2 (262 aa).

The protein belongs to the universal ribosomal protein uS2 family.

The sequence is that of Small ribosomal subunit protein uS2 from Rhodospirillum rubrum (strain ATCC 11170 / ATH 1.1.1 / DSM 467 / LMG 4362 / NCIMB 8255 / S1).